The chain runs to 60 residues: U1-theraphotoxin-Agm3a (60 aa).

The first 21 residues, 1–21 (MKFSVLVFILGLVLLLALSSA), serve as a signal peptide directing secretion. A propeptide spanning residues 22-29 (TEMEENAR) is cleaved from the precursor. 3 disulfides stabilise this stretch: Cys31–Cys45, Cys38–Cys50, and Cys44–Cys57.

The protein belongs to the neurotoxin 10 (Hwtx-1) family. 63 (VsTx1) subfamily. In terms of tissue distribution, expressed by the venom gland.

It localises to the secreted. Its function is as follows. Inhibits sodium channels Nav1.7/SCN9A and potassium channels Kv11.1/KCNH2. Also binds the voltage-sensor domain of the potassium channel KvAP (from the archaeon Aeropyrum pernix) with very slow apparent binding kinetics and affects channel gating. Reaches its target by dynamically partitioning into anionic or zwitterionic headgroup lipid membranes. May bind to the open state of KvAP. In Acanthoscurria gomesiana (Tarantula spider), this protein is U1-theraphotoxin-Agm3a.